The primary structure comprises 390 residues: Lipid-A-disaccharide synthase (390 aa).

This sequence belongs to the LpxB family.

It catalyses the reaction a lipid X + a UDP-2-N,3-O-bis[(3R)-3-hydroxyacyl]-alpha-D-glucosamine = a lipid A disaccharide + UDP + H(+). It participates in bacterial outer membrane biogenesis; LPS lipid A biosynthesis. Condensation of UDP-2,3-diacylglucosamine and 2,3-diacylglucosamine-1-phosphate to form lipid A disaccharide, a precursor of lipid A, a phosphorylated glycolipid that anchors the lipopolysaccharide to the outer membrane of the cell. The sequence is that of Lipid-A-disaccharide synthase from Haemophilus influenzae (strain 86-028NP).